The sequence spans 997 residues: Disease resistance protein RML1A (997 aa).

The region spanning 12-176 is the TIR domain; it reads WRYRVFTSFH…KIARDVSEKL (165 aa). Residue E87 is part of the active site. The region spanning 191 to 447 is the NB-ARC domain; it reads EAHLRKIQSL…HIAIFFNYED (257 aa). LRR repeat units lie at residues 194–218, 534–557, 600–623, 624–647, 649–670, 671–693, 694–714, 715–737, 758–781, and 783–808; these read LRKI…GPAG, TSGI…RFLS, AENL…TQLL, TKLK…SNAT, LEML…IKNL, HKLD…NINL, ASLE…PAFS, TKIK…ITHC, PSSL…CIKD, and QRLD…SLRL.

It catalyses the reaction NAD(+) + H2O = ADP-D-ribose + nicotinamide + H(+). Its function is as follows. TIR-NB-LRR receptor-like protein that confers resistance to the pathogen Leptosphaeria maculans (blackleg disease). The polypeptide is Disease resistance protein RML1A (Arabidopsis thaliana (Mouse-ear cress)).